The following is a 316-amino-acid chain: D-alanine--D-alanine ligase (316 aa).

The region spanning 107–303 is the ATP-grasp domain; the sequence is KEVFAARGLT…FEDLVERILI (197 aa). An ATP-binding site is contributed by 133–188; it reads AEGFGYPVVVKPSQEGSSVGVSIVKSPEELPSALELAFRYDDDILVERFIKGREIQ. Aspartate 256, glutamate 269, and asparagine 271 together coordinate Mg(2+).

The protein belongs to the D-alanine--D-alanine ligase family. It depends on Mg(2+) as a cofactor. Requires Mn(2+) as cofactor.

The protein resides in the cytoplasm. The catalysed reaction is 2 D-alanine + ATP = D-alanyl-D-alanine + ADP + phosphate + H(+). The protein operates within cell wall biogenesis; peptidoglycan biosynthesis. Its function is as follows. Cell wall formation. This chain is D-alanine--D-alanine ligase, found in Geobacter sulfurreducens (strain ATCC 51573 / DSM 12127 / PCA).